The following is a 275-amino-acid chain: Large ribosomal subunit protein uL2 (275 aa).

Residues 210 to 275 (GRNRHRGIRP…DKLIISRKKK (66 aa)) are disordered. Residues 257–275 (FKTRKKKASDKLIISRKKK) show a composition bias toward basic residues.

The protein belongs to the universal ribosomal protein uL2 family. Part of the 50S ribosomal subunit. Forms a bridge to the 30S subunit in the 70S ribosome.

Its function is as follows. One of the primary rRNA binding proteins. Required for association of the 30S and 50S subunits to form the 70S ribosome, for tRNA binding and peptide bond formation. It has been suggested to have peptidyltransferase activity; this is somewhat controversial. Makes several contacts with the 16S rRNA in the 70S ribosome. In Helicobacter hepaticus (strain ATCC 51449 / 3B1), this protein is Large ribosomal subunit protein uL2.